A 313-amino-acid chain; its full sequence is D-alanine--D-alanine ligase (313 aa).

An ATP-grasp domain is found at 107–303 (KQAFAAAGLT…FEALVEQIAC (197 aa)). Residue 135 to 188 (PFGLPVVVKPVQEGSSVGVTIVKKPEDLQAALDEAFRYDTLVLVEKYIKGQEVQ) coordinates ATP. Mg(2+)-binding residues include Asp256, Glu269, and Asn271.

This sequence belongs to the D-alanine--D-alanine ligase family. The cofactor is Mg(2+). Mn(2+) serves as cofactor.

It is found in the cytoplasm. The enzyme catalyses 2 D-alanine + ATP = D-alanyl-D-alanine + ADP + phosphate + H(+). The protein operates within cell wall biogenesis; peptidoglycan biosynthesis. Functionally, cell wall formation. The polypeptide is D-alanine--D-alanine ligase (Trichlorobacter lovleyi (strain ATCC BAA-1151 / DSM 17278 / SZ) (Geobacter lovleyi)).